The chain runs to 941 residues: Zinc finger protein 507 (941 aa).

S95 is modified (phosphoserine). 2 consecutive C2H2-type zinc fingers follow at residues 122 to 144 and 152 to 175; these read YQCS…VKQH and LMCS…VSEH. Residues 165-177 are compositionally biased toward basic and acidic residues; it reads QELEAHVVSEHEN. The disordered stretch occupies residues 165–198; it reads QELEAHVVSEHENSASSQARSSPSGQGATERKSE. Residues 178-192 are compositionally biased toward low complexity; sequence SASSQARSSPSGQGA. A C2H2-type 3 zinc finger spans residues 237–259; it reads YRCLFCSYTCGQQRMLKTHAWKH. At S415 the chain carries Phosphoserine. A disordered region spans residues 455–477; sequence ELSKGLAPDENAPPGRRRTNSES. 5 C2H2-type zinc fingers span residues 630–652, 658–680, 686–709, 746–768, and 774–796; these read YRCR…LRVH, YQCP…MINH, HQCK…REQH, YRCD…RRVH, and YRCS…MWKH. Residues 823-856 are disordered; that stretch reads GKSRGKPLLTSSEERTGPTTGSPENLVSSSELTS. Positions 839–856 are enriched in polar residues; the sequence is GPTTGSPENLVSSSELTS. A C2H2-type 9 zinc finger spans residues 899–921; the sequence is FCCCICGFESTSKESLLDHMKEH.

This sequence belongs to the krueppel C2H2-type zinc-finger protein family.

The protein localises to the nucleus. May be involved in transcriptional regulation. The protein is Zinc finger protein 507 (Znf507) of Mus musculus (Mouse).